We begin with the raw amino-acid sequence, 214 residues long: Dual specificity phosphatase 29 (214 aa).

The region spanning 46-194 (HVNEVWPNLY…LRELDIELAL (149 aa)) is the Tyrosine-protein phosphatase domain. Residue 138–145 (HCAMGRSR) participates in substrate binding. Catalysis depends on Cys139, which acts as the Phosphocysteine intermediate.

This sequence belongs to the protein-tyrosine phosphatase family. Non-receptor class dual specificity subfamily.

Its subcellular location is the cytoplasm. The protein localises to the nucleus. It catalyses the reaction O-phospho-L-tyrosyl-[protein] + H2O = L-tyrosyl-[protein] + phosphate. The enzyme catalyses O-phospho-L-seryl-[protein] + H2O = L-seryl-[protein] + phosphate. It carries out the reaction O-phospho-L-threonyl-[protein] + H2O = L-threonyl-[protein] + phosphate. In terms of biological role, dual specificity phosphatase able to dephosphorylate phosphotyrosine, phosphoserine and phosphothreonine residues within the same substrate, with a preference for phosphotyrosine as a substrate. Involved in the modulation of AMPK and MAPK1/2 signaling pathways. This Gallus gallus (Chicken) protein is Dual specificity phosphatase 29 (DUSP29).